The primary structure comprises 249 residues: 5'-nucleotidase SurE (249 aa).

Residues Asp-8, Asp-9, Ser-39, and Asn-91 each contribute to the a divalent metal cation site.

The protein belongs to the SurE nucleotidase family. Requires a divalent metal cation as cofactor.

Its subcellular location is the cytoplasm. It carries out the reaction a ribonucleoside 5'-phosphate + H2O = a ribonucleoside + phosphate. Its function is as follows. Nucleotidase that shows phosphatase activity on nucleoside 5'-monophosphates. The chain is 5'-nucleotidase SurE from Magnetococcus marinus (strain ATCC BAA-1437 / JCM 17883 / MC-1).